Reading from the N-terminus, the 267-residue chain is Tryptophan synthase alpha chain (267 aa).

Residues Glu-47 and Asp-58 each act as proton acceptor in the active site.

This sequence belongs to the TrpA family. As to quaternary structure, tetramer of two alpha and two beta chains.

It catalyses the reaction (1S,2R)-1-C-(indol-3-yl)glycerol 3-phosphate + L-serine = D-glyceraldehyde 3-phosphate + L-tryptophan + H2O. Its pathway is amino-acid biosynthesis; L-tryptophan biosynthesis; L-tryptophan from chorismate: step 5/5. Functionally, the alpha subunit is responsible for the aldol cleavage of indoleglycerol phosphate to indole and glyceraldehyde 3-phosphate. The protein is Tryptophan synthase alpha chain of Chlorobaculum tepidum (strain ATCC 49652 / DSM 12025 / NBRC 103806 / TLS) (Chlorobium tepidum).